We begin with the raw amino-acid sequence, 1064 residues long: Lysine-specific demethylase 4A (1064 aa).

Position 2 is an N-acetylalanine (alanine 2). In terms of domain architecture, JmjN spans 14–56 (IMTFYPTMEEFRNFSRYIAYIESQGAHRAGLAKVVPPKEWKPR). Tyrosine 132 is a 2-oxoglutarate binding site. A JmjC domain is found at 142–308 (EKHVDEWNIG…YGKQAVLCSC (167 aa)). The Fe cation site is built by histidine 188 and glutamate 190. Residues asparagine 198 and lysine 206 each contribute to the 2-oxoglutarate site. Zn(2+) contacts are provided by cysteine 234 and histidine 240. Position 241 (lysine 241) interacts with 2-oxoglutarate. Histidine 276 lines the Fe cation pocket. Residues cysteine 306 and cysteine 308 each contribute to the Zn(2+) site. Residues 358–384 (ELPPRAGNEEECPEEDMEGVEDGEEGD) form a disordered region. Residues 366–382 (EEECPEEDMEGVEDGEE) are compositionally biased toward acidic residues. Lysine 471 is covalently cross-linked ((Microbial infection) Glycyl lysine isopeptide (Lys-Gly) (interchain with G-Cter in SUMO)). 2 disordered regions span residues 501–537 (FSGS…RAQG) and 616–641 (SDDE…KPLS). Residues 509 to 532 (SSSLGSGSSRDSISSDSETSEPLS) are compositionally biased toward low complexity. Serine 523 carries the post-translational modification Phosphoserine. Residues 597-638 (RQPLSKLPRHHPLVLQECVSDDETSEQLTPEEEAEETEAWAK) are interaction with NCOR1. A compositionally biased stretch (acidic residues) spans 616 to 634 (SDDETSEQLTPEEEAEETE). The segment at 709 to 767 (MCFTSTGCSTDINLSTPYLEEDGTSILVSCKKCSVRVHASCYGVPPAKASEDWMCSRCS) adopts a PHD-type 1 zinc-finger fold. Residues 772 to 805 (EEDCCLCSLRGGALQRANDDRWVHVSCAVAILEA) form a C2HC pre-PHD-type zinc finger. Residues 828–885 (LKCIFCKKRRKRTAGCCVQCSHGRCPTAFHVSCAQAAGVMMQPDDWPFVVFITCFRHK) form a PHD-type 2 zinc finger. 2 Tudor domains span residues 897-954 (QSIT…CLQF) and 955-1011 (GPPA…EELP).

This sequence belongs to the JHDM3 histone demethylase family. Interacts with histone deacetylase proteins HDAC1, HDAC2 and HDAC3. Interacts with RB and NCOR1. Interacts with VRK1. Interacts with FBXO22; this interaction promotes KDM4A ubiquitination. In terms of assembly, (Microbial infection) Interacts with HTLV-1 Tax protein. Requires Fe(2+) as cofactor. In terms of processing, (Microbial infection) SUMOylated by human herpesvirus 8 E3 SUMO-protein ligase K-bZIP/K8 at Lys-471; thereby modulating the chromatin binding and histone demethylase activity of KDM4A. Post-translationally, ubiquitinated by RNF8 and RNF168 following DNA damage, leading to its degradation. Degradation promotes accessibility of H4K20me2 mark for DNA repair protein TP53BP1, which is then recruited. Also ubiquitinated by the SCF(FBXO22) complex; leading to proteasomal degradation. Ubiquitous.

The protein resides in the nucleus. The enzyme catalyses N(6),N(6),N(6)-trimethyl-L-lysyl(9)-[histone H3] + 2 2-oxoglutarate + 2 O2 = N(6)-methyl-L-lysyl(9)-[histone H3] + 2 formaldehyde + 2 succinate + 2 CO2. It catalyses the reaction N(6),N(6),N(6)-trimethyl-L-lysyl(36)-[histone H3] + 2 2-oxoglutarate + 2 O2 = N(6)-methyl-L-lysyl(36)-[histone H3] + 2 formaldehyde + 2 succinate + 2 CO2. Several specific inhibitors are being developed and tested. Functionally, histone demethylase that specifically demethylates 'Lys-9' and 'Lys-36' residues of histone H3, thereby playing a central role in histone code. Does not demethylate histone H3 'Lys-4', H3 'Lys-27' nor H4 'Lys-20'. Demethylates trimethylated H3 'Lys-9' and H3 'Lys-36' residue, while it has no activity on mono- and dimethylated residues. Demethylation of Lys residue generates formaldehyde and succinate. Participates in transcriptional repression of ASCL2 and E2F-responsive promoters via the recruitment of histone deacetylases and NCOR1, respectively. In terms of biological role, crucial for muscle differentiation, promotes transcriptional activation of the Myog gene by directing the removal of repressive chromatin marks at its promoter. Lacks the N-terminal demethylase domain. The protein is Lysine-specific demethylase 4A (KDM4A) of Homo sapiens (Human).